The primary structure comprises 182 residues: CASP-like protein 2B1 (182 aa).

The Cytoplasmic segment spans residues 1-12; it reads MKLIDRRMRLTE. A helical transmembrane segment spans residues 13-31; it reads LLLRCSISVFALLALILVV. Residues 32–52 are Extracellular-facing; that stretch reads TDTEVKLIFTIKKTAKYTDMK. A helical transmembrane segment spans residues 53-73; that stretch reads AVVFLVVANGIAAVYSLLQSV. Residues 74–89 are Cytoplasmic-facing; the sequence is RCVVGTMKGRVLFSKP. Residues 90-110 traverse the membrane as a helical segment; sequence LAWAFFSGDQAMAYLNVAAIA. The Extracellular portion of the chain corresponds to 111-141; that stretch reads ATAESGVIAREGEEDLQWMRVCNMYGKFCNQ. Residues 142–162 traverse the membrane as a helical segment; sequence MAIGVSSALLASIAMVFVSCI. Residues 163 to 182 are Cytoplasmic-facing; the sequence is SAFSLFRLYGATRDRRTTPW.

The protein belongs to the Casparian strip membrane proteins (CASP) family. Homodimer and heterodimers.

Its subcellular location is the cell membrane. This Arabidopsis lyrata subsp. lyrata (Lyre-leaved rock-cress) protein is CASP-like protein 2B1.